A 266-amino-acid chain; its full sequence is Energy-coupling factor transporter ATP-binding protein EcfA1 (266 aa).

The region spanning 2–237 (IKLNNVTFRY…EKIIEIAKIA (236 aa)) is the ABC transporter domain. ATP is bound at residue 37 to 44 (GHNGSGKS).

This sequence belongs to the ABC transporter superfamily. Energy-coupling factor EcfA family. As to quaternary structure, forms a stable energy-coupling factor (ECF) transporter complex composed of 2 membrane-embedded substrate-binding proteins (S component), 2 ATP-binding proteins (A component) and 2 transmembrane proteins (T component).

It localises to the cell membrane. In terms of biological role, ATP-binding (A) component of a common energy-coupling factor (ECF) ABC-transporter complex. Unlike classic ABC transporters this ECF transporter provides the energy necessary to transport a number of different substrates. In Mycoplasmopsis synoviae (strain 53) (Mycoplasma synoviae), this protein is Energy-coupling factor transporter ATP-binding protein EcfA1.